A 309-amino-acid chain; its full sequence is PI-PLC X domain-containing protein 1 (309 aa).

Residues 17 to 193 (HMWDIPLWNL…QVILSYDDES (177 aa)) form the PI-PLC X-box domain.

This Danio rerio (Zebrafish) protein is PI-PLC X domain-containing protein 1 (plcxd1).